Reading from the N-terminus, the 564-residue chain is MALTVFEHASALWYRLQGSVSLAVLSTLAVVIAGWYILSSISLYFSRRQFIALHGCKPIANRYPSKWFGINFILEAGRTYKERRYLDALTWNFRNIGYTHEVRALGGTSVWTVEPENIKAVLTSKFKDYSLGNRPAVMGPLLGRGVFVTDGEEWSHSRALLRPNFAKDQVADLSMIERHLQQLLKMIPDDGKAIDLNDLILSFTMDSSTEFLFGESTETLTSGINRQFSDAFAYSLHDISSGLRLGPWYKFRRTDPKAVQSHRICREYADKYVEKALEYRRNYIKSVEDGATDKPSIDGGDSRRTFLRELALATDDREKLRDELLSLLLAGRDTTASLIGSLLFSLAKKPECWEKVRSEIEETLHGDLPSYEQLRNFKYAKYCVNEALRLYPPVPNNAKIAIRDTVLPRGGGPEGRDPIIVPKDAPVIYTVYALHRRYDLFGDDADDFRPERWENQRYTWEFLPFNGGPRICLGQQYALVETLYVLVRFAQHFSKIESMDPEPWTESLALTVSSGNGVKVKLERGSSDVHGLSTQGVLIDYGGLFAPTQKVPGTGVTQISKGKA.

A helical transmembrane segment spans residues 18-38 (GSVSLAVLSTLAVVIAGWYIL). Cys-472 provides a ligand contact to heme.

Belongs to the cytochrome P450 family. Heme serves as cofactor.

The protein resides in the membrane. The protein operates within mycotoxin biosynthesis. Its function is as follows. Cytochrome P450 monooxygenase; part of the gene cluster that mediates the biosynthesis of fusaridione A, a bright yellow trans-fused decalin-containing tetramic acid with antimicrobial activity. The PKS module of fsdS catalyzes the formation of the polyketide unit which is then conjugated to L-tyrosine by the condensation domain of the fsdS NRPS module. Activity of the Dieckmann cyclase domain (RED) results in release of the intermediate fusaridione A. The unstable pyrrolidinedione ring of fusaridione A is opened through a reverse-Dieckmann reaction to afford its ring-opened form. The chain is Cytochrome P450 monooxygenase fsdH from Fusarium heterosporum.